Here is an 800-residue protein sequence, read N- to C-terminus: Phenylalanine--tRNA ligase beta subunit (800 aa).

The tRNA-binding domain maps to 39–154; sequence TKDIKNLVVG…ESQVPGTDAL (116 aa). Positions 408–483 constitute a B5 domain; it reads AFITPIDITA…RIYGYDDIPS (76 aa). Residues D461, D467, E470, and E471 each coordinate Mg(2+). Residues 708-800 form the FDX-ACB domain; the sequence is PIFPGMSRDI…ALIEQGAVIR (93 aa).

The protein belongs to the phenylalanyl-tRNA synthetase beta subunit family. Type 1 subfamily. In terms of assembly, tetramer of two alpha and two beta subunits. Mg(2+) serves as cofactor.

It localises to the cytoplasm. The enzyme catalyses tRNA(Phe) + L-phenylalanine + ATP = L-phenylalanyl-tRNA(Phe) + AMP + diphosphate + H(+). The polypeptide is Phenylalanine--tRNA ligase beta subunit (Staphylococcus aureus (strain bovine RF122 / ET3-1)).